Reading from the N-terminus, the 329-residue chain is 4-hydroxythreonine-4-phosphate dehydrogenase (329 aa).

Positions 136 and 137 each coordinate substrate. A divalent metal cation contacts are provided by His-166, His-211, and His-266. Positions 274, 283, and 292 each coordinate substrate.

This sequence belongs to the PdxA family. Homodimer. Requires Zn(2+) as cofactor. It depends on Mg(2+) as a cofactor. The cofactor is Co(2+).

The protein localises to the cytoplasm. It carries out the reaction 4-(phosphooxy)-L-threonine + NAD(+) = 3-amino-2-oxopropyl phosphate + CO2 + NADH. It participates in cofactor biosynthesis; pyridoxine 5'-phosphate biosynthesis; pyridoxine 5'-phosphate from D-erythrose 4-phosphate: step 4/5. Its function is as follows. Catalyzes the NAD(P)-dependent oxidation of 4-(phosphooxy)-L-threonine (HTP) into 2-amino-3-oxo-4-(phosphooxy)butyric acid which spontaneously decarboxylates to form 3-amino-2-oxopropyl phosphate (AHAP). This Shigella flexneri serotype 5b (strain 8401) protein is 4-hydroxythreonine-4-phosphate dehydrogenase.